The following is a 199-amino-acid chain: Probable GTP-binding protein EngB (199 aa).

An EngB-type G domain is found at 28–199; the sequence is DLPEIALAGR…ESWDTILEYL (172 aa). GTP-binding positions include 36–43, 63–67, 81–84, 148–151, and 180–182; these read GRSNVGKS, GKTQL, DVPG, TKAD, and FSS. S43 and T65 together coordinate Mg(2+).

This sequence belongs to the TRAFAC class TrmE-Era-EngA-EngB-Septin-like GTPase superfamily. EngB GTPase family. Mg(2+) serves as cofactor.

Functionally, necessary for normal cell division and for the maintenance of normal septation. This chain is Probable GTP-binding protein EngB, found in Streptococcus equi subsp. equi (strain 4047).